A 173-amino-acid polypeptide reads, in one-letter code: Adenine phosphoribosyltransferase (173 aa).

This sequence belongs to the purine/pyrimidine phosphoribosyltransferase family. As to quaternary structure, homodimer.

Its subcellular location is the cytoplasm. It catalyses the reaction AMP + diphosphate = 5-phospho-alpha-D-ribose 1-diphosphate + adenine. It participates in purine metabolism; AMP biosynthesis via salvage pathway; AMP from adenine: step 1/1. Catalyzes a salvage reaction resulting in the formation of AMP, that is energically less costly than de novo synthesis. This is Adenine phosphoribosyltransferase from Petrotoga mobilis (strain DSM 10674 / SJ95).